The chain runs to 436 residues: Enolase (436 aa).

Q167 is a (2R)-2-phosphoglycerate binding site. The Proton donor role is filled by E209. Mg(2+)-binding residues include D246, E291, and D318. Positions 343, 372, 373, and 394 each coordinate (2R)-2-phosphoglycerate. The active-site Proton acceptor is the K343.

Belongs to the enolase family. As to quaternary structure, component of the RNA degradosome, a multiprotein complex involved in RNA processing and mRNA degradation. The cofactor is Mg(2+).

Its subcellular location is the cytoplasm. The protein resides in the secreted. It is found in the cell surface. The enzyme catalyses (2R)-2-phosphoglycerate = phosphoenolpyruvate + H2O. Its pathway is carbohydrate degradation; glycolysis; pyruvate from D-glyceraldehyde 3-phosphate: step 4/5. Its function is as follows. Catalyzes the reversible conversion of 2-phosphoglycerate (2-PG) into phosphoenolpyruvate (PEP). It is essential for the degradation of carbohydrates via glycolysis. This Haemophilus influenzae (strain PittGG) protein is Enolase.